The chain runs to 165 residues: Small ribosomal subunit protein uS5 (165 aa).

An S5 DRBM domain is found at 13 to 76 (LEEKVLVVNR…EAARKNLITI (64 aa)).

Belongs to the universal ribosomal protein uS5 family. In terms of assembly, part of the 30S ribosomal subunit. Contacts proteins S4 and S8.

In terms of biological role, with S4 and S12 plays an important role in translational accuracy. Located at the back of the 30S subunit body where it stabilizes the conformation of the head with respect to the body. This chain is Small ribosomal subunit protein uS5, found in Chlamydia felis (strain Fe/C-56) (Chlamydophila felis).